The following is a 526-amino-acid chain: Berberine bridge enzyme-like 11 (526 aa).

Positions 1-21 (MEKLLIICMLLISVLVATSQS) are cleaved as a signal peptide. An intrachain disulfide couples cysteine 31 to cysteine 94. N-linked (GlcNAc...) asparagine glycans are attached at residues asparagine 52, asparagine 136, asparagine 273, and asparagine 482. One can recognise an FAD-binding PCMH-type domain in the interval 72–247 (TTPKPIAIIT…MGYKIRLVPV (176 aa)). The segment at residues 109–171 (HDFEGLSYTS…NVLGFPAGLC (63 aa)) is a cross-link (6-(S-cysteinyl)-8alpha-(pros-histidyl)-FAD (His-Cys)).

Belongs to the oxygen-dependent FAD-linked oxidoreductase family. The cofactor is FAD. Post-translationally, the FAD cofactor is bound via a bicovalent 6-S-cysteinyl, 8alpha-N1-histidyl FAD linkage.

The protein localises to the secreted. The protein resides in the cell wall. The polypeptide is Berberine bridge enzyme-like 11 (Arabidopsis thaliana (Mouse-ear cress)).